The following is a 59-amino-acid chain: Small, acid-soluble spore protein H (59 aa).

The protein belongs to the SspH family.

The protein resides in the spore core. The sequence is that of Small, acid-soluble spore protein H from Alkaliphilus metalliredigens (strain QYMF).